A 110-amino-acid polypeptide reads, in one-letter code: Large ribosomal subunit protein uL22 (110 aa).

Belongs to the universal ribosomal protein uL22 family. As to quaternary structure, part of the 50S ribosomal subunit.

In terms of biological role, this protein binds specifically to 23S rRNA; its binding is stimulated by other ribosomal proteins, e.g. L4, L17, and L20. It is important during the early stages of 50S assembly. It makes multiple contacts with different domains of the 23S rRNA in the assembled 50S subunit and ribosome. The globular domain of the protein is located near the polypeptide exit tunnel on the outside of the subunit, while an extended beta-hairpin is found that lines the wall of the exit tunnel in the center of the 70S ribosome. This is Large ribosomal subunit protein uL22 from Shewanella halifaxensis (strain HAW-EB4).